Consider the following 523-residue polypeptide: MKKKPLSAKIVFMKITEKILIVDFGGQYNQLIARRVRDLNVYSDIVPASKALDYIRENKPIGIIFTGGPNSVYEEKAPLPPKEIFNLNIPILGICYGMQAMAHCLGGKVEKSLKREFGKTLTKFDTGIPLFKNIKDKSSVWMSHVDCVSRLPEGFVSAAQTANTKNAAMANKEKKLYGIQFHAEVEHSEEGQNIIKNFLYNVCGAKGDWNMKSFLAEAIKDVQNTVKDGKVLLALSGGVDSSVLAALLNRAVGKNLTCIFVDHGLMRKNEGDEVEAAFRDTPMNFIRVNAESRFLGKLKGVSDPEKKRKIIGEEFIRVFEEEAEKIGTVDFLAQGTIYADVVESGTKGSAVIKSHHNVGGLPDHISFKSLIEPLKTLFKDEIRNLGTELGLPDYLVHRQPFPGPGLAIRIMGEITEEKLDILREADAIWRSELEHADIKKDLSQYFAVLTSTKTVGVMGDFRTYDYTLALRAVKTSDFMSADWVRIPYEVLDKVSSRIINEVKGINRIVYDITSKPPATIEWE.

A Glutamine amidotransferase type-1 domain is found at 18-208; it reads KILIVDFGGQ…LYNVCGAKGD (191 aa). Catalysis depends on C95, which acts as the Nucleophile. Residues H182 and E184 contribute to the active site. A GMPS ATP-PPase domain is found at 209–398; that stretch reads WNMKSFLAEA…LGLPDYLVHR (190 aa). 236–242 is an ATP binding site; sequence SGGVDSS.

As to quaternary structure, homodimer.

The enzyme catalyses XMP + L-glutamine + ATP + H2O = GMP + L-glutamate + AMP + diphosphate + 2 H(+). It participates in purine metabolism; GMP biosynthesis; GMP from XMP (L-Gln route): step 1/1. Functionally, catalyzes the synthesis of GMP from XMP. This chain is GMP synthase [glutamine-hydrolyzing], found in Treponema denticola (strain ATCC 35405 / DSM 14222 / CIP 103919 / JCM 8153 / KCTC 15104).